The chain runs to 35 residues: Photosystem II reaction center protein Psb30 (35 aa).

Residues 7 to 27 (LIANFGALALITLAGPAVIFI) traverse the membrane as a helical segment.

The protein belongs to the Psb30/Ycf12 family. As to quaternary structure, PSII is composed of 1 copy each of membrane proteins PsbA, PsbB, PsbC, PsbD, PsbE, PsbF, PsbH, PsbI, PsbJ, PsbK, PsbL, PsbM, PsbT, PsbX, PsbY, PsbZ, Psb30/Ycf12, peripheral proteins PsbO, CyanoQ (PsbQ), PsbU, PsbV and a large number of cofactors. It forms dimeric complexes.

It localises to the cellular thylakoid membrane. In terms of biological role, a core subunit of photosystem II (PSII), probably helps stabilize the reaction center. This Synechococcus sp. (strain CC9311) protein is Photosystem II reaction center protein Psb30.